The following is a 542-amino-acid chain: Chromatin structure-remodeling complex subunit rsc4 (542 aa).

The 111-residue stretch at 6 to 116 (HNAPFDKTKF…NTANSLESKD (111 aa)) folds into the Bromo 1 domain. Disordered regions lie at residues 114 to 139 (SKDG…KPGT) and 246 to 327 (ISSF…PIPE). Positions 119 to 128 (LNEEENEEME) are enriched in acidic residues. A Bromo 2 domain is found at 139–249 (TNEIDVPKVI…QLSSSLISSF (111 aa)). The span at 252–266 (QPKEHSPATSKHEPE) shows a compositional bias: basic and acidic residues. Phosphoserine occurs at positions 257, 271, 287, and 313. Positions 268 to 280 (TPASPTPSVSAST) are enriched in low complexity. Positions 286–298 (TSVAPSFITSDQA) are enriched in polar residues. Positions 304–322 (LKSEEAHVESFSKESEKDQ) are enriched in basic and acidic residues.

As to quaternary structure, component of the RSC complex composed of at least arp9, arp42, rsc1, rsc4, rsc7, rsc9, rsc58, sfh1, snf21, ssr1, ssr2, ssr3 and ssr4. The complex interacts with histone and histone variant components of centromeric chromatin.

It is found in the nucleus. Its function is as follows. Component of the chromatin structure remodeling complex (RSC), which is involved in transcription regulation and nucleosome positioning. Controls particularly membrane and organelle development genes. This chain is Chromatin structure-remodeling complex subunit rsc4 (rsc4), found in Schizosaccharomyces pombe (strain 972 / ATCC 24843) (Fission yeast).